Reading from the N-terminus, the 290-residue chain is S-adenosylmethionine-dependent nucleotide dehydratase (290 aa).

Residues 6-226 (SGNNIIPSVN…VNRHSKNKFL (221 aa)) form the Radical SAM core domain. 3 residues coordinate [4Fe-4S] cluster: C22, C26, and C29.

Belongs to the radical SAM superfamily. Viperin family. It depends on [4Fe-4S] cluster as a cofactor.

It catalyses the reaction UTP + AH2 + S-adenosyl-L-methionine = 3'-deoxy-3',4'-didehydro-UTP + 5'-deoxyadenosine + L-methionine + A + H2O + H(+). Its function is as follows. Expression of pVip47 in E.coli (strain MG1655) confers resistance to phage P1; has no effect against T7. Catalyzes the conversion of uridine triphosphate (UTP) to 3'-deoxy-3',4'-didehydro-UTP (ddhUTP), probably via a SAM-dependent radical mechanism. The modified nucleotide represses transcription from T7 RNA polymerase-directed genes (possibly by acting as chain terminators), strongly suggesting these nucleotides block viral polymerase transcription. How this protein allows bacteria to resist viruses that do not encode their own RNA polymerase (such as lambda, P1) is unknown. This is S-adenosylmethionine-dependent nucleotide dehydratase from Flammeovirga pacifica.